We begin with the raw amino-acid sequence, 314 residues long: tRNA pseudouridine synthase B (314 aa).

His43 serves as a coordination point for substrate. Asp48 acts as the Nucleophile in catalysis. Substrate contacts are provided by Tyr76, Tyr179, and Leu200.

Belongs to the pseudouridine synthase TruB family. Type 1 subfamily.

It catalyses the reaction uridine(55) in tRNA = pseudouridine(55) in tRNA. In terms of biological role, responsible for synthesis of pseudouridine from uracil-55 in the psi GC loop of transfer RNAs. This chain is tRNA pseudouridine synthase B, found in Citrobacter koseri (strain ATCC BAA-895 / CDC 4225-83 / SGSC4696).